The primary structure comprises 373 residues: GTPase Obg (373 aa).

In terms of domain architecture, Obg spans 1 to 159 (MKFIDEARIE…RMVRLELKVL (159 aa)). A disordered region spans residues 128–147 (LHFKSSTNRAPRQKTDGKPG). The OBG-type G domain occupies 160–334 (ADVGLLGMPN…LCYAVFDHIS (175 aa)). Residues 166 to 173 (GMPNAGKS), 191 to 195 (FTTLA), 213 to 216 (DIPG), 284 to 287 (NKLD), and 315 to 317 (SAL) each bind GTP. Mg(2+) contacts are provided by serine 173 and threonine 193. Positions 354–373 (FREKPQAPAAADDAGTDPQV) are disordered. Low complexity predominate over residues 359–373 (QAPAAADDAGTDPQV).

This sequence belongs to the TRAFAC class OBG-HflX-like GTPase superfamily. OBG GTPase family. In terms of assembly, monomer. It depends on Mg(2+) as a cofactor.

Its subcellular location is the cytoplasm. An essential GTPase which binds GTP, GDP and possibly (p)ppGpp with moderate affinity, with high nucleotide exchange rates and a fairly low GTP hydrolysis rate. Plays a role in control of the cell cycle, stress response, ribosome biogenesis and in those bacteria that undergo differentiation, in morphogenesis control. This Paraburkholderia phytofirmans (strain DSM 17436 / LMG 22146 / PsJN) (Burkholderia phytofirmans) protein is GTPase Obg.